The sequence spans 39 residues: MTVSISVPSASTSDFKKFAINHLDILPRQAGVQYLFNLT.

This is an uncharacterized protein from Haemophilus influenzae (strain ATCC 51907 / DSM 11121 / KW20 / Rd).